We begin with the raw amino-acid sequence, 487 residues long: MKAQPKASHFIDGEYVEDTDGTVIESLYPATGEVIARLHAATPAIVEKAIAAARRAQPEWAAMSPMARGRILKRAADIMRERNRALSELETLDTGKPIQETIVADPTSGADAFEFFGGVAPAGLNGSHIPLGQDFAYTKRVPLGVCVGIGAWNYPQQIACWKAAPALISGNAMVFKPSENTPLGALKIAEILHEAGLPKGLFNVIQGDRDTGPLLVNHPDVAKVSLTGSVPTGRRVAAAAAGNLKHVTMELGGKSPLIVFDDADLDSAVGGAMLGNFYSTGQVCSNGTRVFVQKGIKTEFLKRLKARTEAMLIGDPLDEATQIGPMVSWAQREKVVAYIEKGKAEGATLVAGGGIPNNVSGEGYYIQPTVFADVTDDMTIAREEIFGPVMSVLDFDDEDEVIARANASEFGLSGGVFTADLSRAHRVVDRLEAGTLWINAYNLAPVEIPFGGSKQSGFGRENSLAALEHYSELKTVYVGMGPVQAPY.

Positions 26 and 93 each coordinate K(+). 150 to 152 provides a ligand contact to NAD(+); the sequence is GAW. Lys-162 (charge relay system) is an active-site residue. NAD(+)-binding positions include 176–179 and 229–232; these read KPSE and SVPT. Leu-244 contacts K(+). Glu-250 functions as the Proton acceptor in the catalytic mechanism. NAD(+) is bound by residues Gly-252, Cys-284, and Glu-384. Residue Cys-284 is the Nucleophile of the active site. Cys-284 carries the post-translational modification Cysteine sulfenic acid (-SOH). K(+) contacts are provided by Lys-454 and Gly-457. The active-site Charge relay system is the Glu-461.

This sequence belongs to the aldehyde dehydrogenase family. As to quaternary structure, dimer of dimers. Requires K(+) as cofactor.

It catalyses the reaction betaine aldehyde + NAD(+) + H2O = glycine betaine + NADH + 2 H(+). It functions in the pathway amine and polyamine biosynthesis; betaine biosynthesis via choline pathway; betaine from betaine aldehyde: step 1/1. Involved in the biosynthesis of the osmoprotectant glycine betaine. Catalyzes the irreversible oxidation of betaine aldehyde to the corresponding acid. The polypeptide is Betaine aldehyde dehydrogenase (Rhizobium leguminosarum bv. trifolii (strain WSM2304)).